The chain runs to 207 residues: Sodium/potassium-transporting ATPase subunit beta-1-interacting protein 1 (207 aa).

The next 3 helical transmembrane spans lie at 2 to 22 (GRCS…AAAL), 35 to 55 (APIL…LGTL), and 62 to 82 (LILY…IICF). Asparagine 100 carries N-linked (GlcNAc...) asparagine glycosylation. Residues 147 to 167 (ALSSALQIFLALFGFVYACYV) traverse the membrane as a helical segment.

The protein belongs to the NKAIN family. As to quaternary structure, interacts with atp1b1 C-terminus.

The protein localises to the cell membrane. The polypeptide is Sodium/potassium-transporting ATPase subunit beta-1-interacting protein 1 (nkain1) (Xenopus tropicalis (Western clawed frog)).